The primary structure comprises 31 residues: Cliotide T11 (31 aa).

The segment at residues 1–31 (GIPCGESCVFIPCTITALLGCSCKDKVCYKN) is a cross-link (cyclopeptide (Gly-Asn)). 3 disulfides stabilise this stretch: Cys4–Cys21, Cys8–Cys23, and Cys13–Cys28.

Contains 3 disulfide bonds. Post-translationally, this is a cyclic peptide. As to expression, expressed in seed but not in root, nodule, flower, stem, shoot, leaf and pod (at protein level).

Its function is as follows. Probably participates in a plant defense mechanism. The protein is Cliotide T11 of Clitoria ternatea (Butterfly pea).